Consider the following 430-residue polypeptide: Centrosomal protein CEP57L1 (430 aa).

Serine 45 is modified (phosphoserine). The stretch at 46 to 213 forms a coiled coil; the sequence is PNNQALVSAL…HQRRLFQDRA (168 aa). 2 disordered regions span residues 248–290 and 362–430; these read CLKR…GEPF and RKLQ…KWEQ. 3 stretches are compositionally biased toward basic and acidic residues: residues 249 to 272, 362 to 372, and 421 to 430; these read LKREPPQHTDCRFRGPASERERPP, RKLQEKVENSR, and LRRDDVKWEQ. Positions 290 to 377 form a coiled coil; that stretch reads FSICDNLSEL…VENSRINESS (88 aa).

Belongs to the translokin family.

Its subcellular location is the cytoplasm. The protein resides in the cytoskeleton. It is found in the microtubule organizing center. The protein localises to the centrosome. Functionally, centrosomal protein which may be required for microtubule attachment to centrosomes. The chain is Centrosomal protein CEP57L1 (Cep57l1) from Rattus norvegicus (Rat).